The following is a 423-amino-acid chain: Serine--tRNA ligase (423 aa).

The disordered stretch occupies residues Pro-107–Pro-130. The span at Ser-110–Arg-124 shows a compositional bias: basic and acidic residues. Residue Thr-231–Glu-233 coordinates L-serine. Arg-262–Glu-264 is an ATP binding site. Glu-285 lines the L-serine pocket. Glu-349–Ser-352 provides a ligand contact to ATP. Ser-385 contacts L-serine.

This sequence belongs to the class-II aminoacyl-tRNA synthetase family. Type-1 seryl-tRNA synthetase subfamily. As to quaternary structure, homodimer. The tRNA molecule binds across the dimer.

It localises to the cytoplasm. The enzyme catalyses tRNA(Ser) + L-serine + ATP = L-seryl-tRNA(Ser) + AMP + diphosphate + H(+). It catalyses the reaction tRNA(Sec) + L-serine + ATP = L-seryl-tRNA(Sec) + AMP + diphosphate + H(+). The protein operates within aminoacyl-tRNA biosynthesis; selenocysteinyl-tRNA(Sec) biosynthesis; L-seryl-tRNA(Sec) from L-serine and tRNA(Sec): step 1/1. Functionally, catalyzes the attachment of serine to tRNA(Ser). Is also able to aminoacylate tRNA(Sec) with serine, to form the misacylated tRNA L-seryl-tRNA(Sec), which will be further converted into selenocysteinyl-tRNA(Sec). This Coxiella burnetii (strain Dugway 5J108-111) protein is Serine--tRNA ligase.